A 192-amino-acid chain; its full sequence is Adenylate kinase (192 aa).

10 to 15 provides a ligand contact to ATP; the sequence is GAGKGT. The NMP stretch occupies residues 30–59; the sequence is STGDMLRTAVAQATEVGKRAKAVMDAGQLV. AMP is bound by residues T31, R36, 57–59, 85–88, and Q92; these read QLV and GYPR. The interval 126-142 is LID; that stretch reads NRVTETVAAGGTVRSDD. Residue R127 participates in ATP binding. 2 residues coordinate AMP: R139 and R150. Position 178 (A178) interacts with ATP.

Belongs to the adenylate kinase family. In terms of assembly, monomer.

The protein localises to the cytoplasm. The catalysed reaction is AMP + ATP = 2 ADP. It functions in the pathway purine metabolism; AMP biosynthesis via salvage pathway; AMP from ADP: step 1/1. Functionally, catalyzes the reversible transfer of the terminal phosphate group between ATP and AMP. Plays an important role in cellular energy homeostasis and in adenine nucleotide metabolism. The chain is Adenylate kinase from Rhizobium meliloti (strain 1021) (Ensifer meliloti).